We begin with the raw amino-acid sequence, 294 residues long: MTKAVLTSISQLALKALLYEVSLSPKPGLVDRFDNGAHDDMSFMTFIDSMIALSPFFQAYIETGFAYAKEEPLLLFNRLRQLGQKAEETMFCATQGINTHKGLNFSMALLLGATGAYLARTPHLMTDLGCFSKEDTLAICRLVKPMTAHLIQTDLGHLNTKKEFTYGEQLFVTYGIKGPRGEASEGFTTLTDHALPYFRQMISQNDPETSQLRLLVYLMSIVEDGNLIHRGGIEAWKGVKADMRLLLQQDLSTTDLRLALSSYNQCLINQHLSPGGAADLLALTFYFAFLEKLL.

Belongs to the CitG/MdcB family.

It carries out the reaction 3'-dephospho-CoA + ATP = 2'-(5''-triphospho-alpha-D-ribosyl)-3'-dephospho-CoA + adenine. The chain is Probable 2-(5''-triphosphoribosyl)-3'-dephosphocoenzyme-A synthase from Streptococcus pyogenes serotype M28 (strain MGAS6180).